The following is a 487-amino-acid chain: Rhoptry apical surface protein 1 (487 aa).

A disordered region spans residues 337 to 487 (EVAMSGRGGH…EEEQPLLFTQ (151 aa)). 2 stretches are compositionally biased toward basic and acidic residues: residues 385-399 (DGIR…DRRA) and 454-475 (EKNE…GVEY).

As to quaternary structure, interacts with RASP2.

It is found in the cytoplasmic vesicle. The protein resides in the secretory vesicle. The protein localises to the rhoptry membrane. This Toxoplasma gondii (strain ATCC 50853 / GT1) protein is Rhoptry apical surface protein 1.